Here is a 565-residue protein sequence, read N- to C-terminus: Periplasmic trehalase (565 aa).

A signal peptide spans 1–30; the sequence is MKSPTPSRPQKMALIPACIFLCFAALSVQA. Residues Arg-152, 159–160, Asn-196, 205–207, 277–279, and Gly-310 contribute to the substrate site; these read WD, RSQ, and RPE. Residues Asp-312 and Glu-496 each act as proton donor/acceptor in the active site. Glu-511 serves as a coordination point for substrate. The interval 539–565 is disordered; it reads CDNVPATRPLSESTTQPLKQKEAEPTP.

It belongs to the glycosyl hydrolase 37 family. In terms of assembly, monomer.

Its subcellular location is the periplasm. The enzyme catalyses alpha,alpha-trehalose + H2O = alpha-D-glucose + beta-D-glucose. Its function is as follows. Provides the cells with the ability to utilize trehalose at high osmolarity by splitting it into glucose molecules that can subsequently be taken up by the phosphotransferase-mediated uptake system. The protein is Periplasmic trehalase of Escherichia coli O7:K1 (strain IAI39 / ExPEC).